The following is a 107-amino-acid chain: Flagellar hook-basal body complex protein FliE (107 aa).

Belongs to the FliE family.

The protein resides in the bacterial flagellum basal body. The polypeptide is Flagellar hook-basal body complex protein FliE (Mesorhizobium japonicum (strain LMG 29417 / CECT 9101 / MAFF 303099) (Mesorhizobium loti (strain MAFF 303099))).